Reading from the N-terminus, the 60-residue chain is Large ribosomal subunit protein bL32 (60 aa).

The interval 1–23 is disordered; the sequence is MAVPARHTSKAKKNKRRTHYKLT. Residues 7–20 are compositionally biased toward basic residues; sequence HTSKAKKNKRRTHY.

It belongs to the bacterial ribosomal protein bL32 family.

In Streptococcus equi subsp. equi (strain 4047), this protein is Large ribosomal subunit protein bL32.